Consider the following 245-residue polypeptide: Eukaryotic translation initiation factor 3 subunit K (245 aa).

The 182-residue stretch at 46 to 227 folds into the PCI domain; that stretch reads YDCYANLALL…EAKGTVVREN (182 aa).

This sequence belongs to the eIF-3 subunit K family. In terms of assembly, component of the eukaryotic translation initiation factor 3 (eIF-3) complex.

It localises to the cytoplasm. In terms of biological role, component of the eukaryotic translation initiation factor 3 (eIF-3) complex, which is involved in protein synthesis of a specialized repertoire of mRNAs and, together with other initiation factors, stimulates binding of mRNA and methionyl-tRNAi to the 40S ribosome. The eIF-3 complex specifically targets and initiates translation of a subset of mRNAs involved in cell proliferation. This chain is Eukaryotic translation initiation factor 3 subunit K, found in Sclerotinia sclerotiorum (strain ATCC 18683 / 1980 / Ss-1) (White mold).